The following is a 128-amino-acid chain: Transcription antitermination protein NusB (128 aa).

The protein belongs to the NusB family.

Involved in transcription antitermination. Required for transcription of ribosomal RNA (rRNA) genes. Binds specifically to the boxA antiterminator sequence of the ribosomal RNA (rrn) operons. The polypeptide is Transcription antitermination protein NusB (Listeria welshimeri serovar 6b (strain ATCC 35897 / DSM 20650 / CCUG 15529 / CIP 8149 / NCTC 11857 / SLCC 5334 / V8)).